We begin with the raw amino-acid sequence, 82 residues long: Probable acyl carrier protein IacP (82 aa).

In terms of domain architecture, Carrier spans M3–L78. O-(pantetheine 4'-phosphoryl)serine is present on S38.

4'-phosphopantetheine is transferred from CoA to a specific serine of apo-IacP.

The protein localises to the cytoplasm. In terms of biological role, acyl carrier protein. The polypeptide is Probable acyl carrier protein IacP (iacP) (Salmonella typhimurium (strain SL1344)).